Here is a 158-residue protein sequence, read N- to C-terminus: Endoribonuclease YbeY (158 aa).

The Zn(2+) site is built by histidine 117, histidine 121, and histidine 127.

Belongs to the endoribonuclease YbeY family. Zn(2+) is required as a cofactor.

It is found in the cytoplasm. Single strand-specific metallo-endoribonuclease involved in late-stage 70S ribosome quality control and in maturation of the 3' terminus of the 16S rRNA. The sequence is that of Endoribonuclease YbeY from Buchnera aphidicola subsp. Schizaphis graminum (strain Sg).